The sequence spans 344 residues: Anthranilate phosphoribosyltransferase (344 aa).

Residues G81, 84–85 (GD), S89, 91–94 (NIST), 109–117 (KHGNRALSS), and A121 contribute to the 5-phospho-alpha-D-ribose 1-diphosphate site. G81 is an anthranilate binding site. Residue S93 coordinates Mg(2+). An anthranilate-binding site is contributed by N112. R167 provides a ligand contact to anthranilate. Mg(2+) is bound by residues D226 and E227.

This sequence belongs to the anthranilate phosphoribosyltransferase family. Homodimer. Requires Mg(2+) as cofactor.

The catalysed reaction is N-(5-phospho-beta-D-ribosyl)anthranilate + diphosphate = 5-phospho-alpha-D-ribose 1-diphosphate + anthranilate. It participates in amino-acid biosynthesis; L-tryptophan biosynthesis; L-tryptophan from chorismate: step 2/5. Its function is as follows. Catalyzes the transfer of the phosphoribosyl group of 5-phosphorylribose-1-pyrophosphate (PRPP) to anthranilate to yield N-(5'-phosphoribosyl)-anthranilate (PRA). The chain is Anthranilate phosphoribosyltransferase from Azorhizobium caulinodans (strain ATCC 43989 / DSM 5975 / JCM 20966 / LMG 6465 / NBRC 14845 / NCIMB 13405 / ORS 571).